Consider the following 71-residue polypeptide: Omega-conotoxin-like Ac6.4 (71 aa).

An N-terminal signal peptide occupies residues 1–22; sequence MKLTCVVIVAVLLLTACQLLTA. The propeptide occupies 23-45; it reads DDSRGTQKHRALRSDTKLSMSTR. 3 disulfides stabilise this stretch: Cys46–Cys61, Cys53–Cys65, and Cys60–Cys70. A Cysteine amide modification is found at Cys70.

Belongs to the conotoxin O1 superfamily. As to expression, expressed by the venom duct.

It localises to the secreted. Functionally, omega-conotoxins act at presynaptic membranes, they bind and block voltage-gated calcium channels (Cav). The protein is Omega-conotoxin-like Ac6.4 of Conus achatinus (Little frog cone).